The chain runs to 284 residues: Tropomyosin (284 aa).

2 disordered regions span residues 1–27 and 99–131; these read MDAIKKKMQAMKVDRENAQDLAEQMEQ and YERSEEKLNSTTEKLEEASKAADESERNRKVLE. Residues 1 to 273 are a coiled coil; it reads MDAIKKKMQA…KERYKAISDD (273 aa). Residues 102 to 131 show a composition bias toward basic and acidic residues; that stretch reads SEEKLNSTTEKLEEASKAADESERNRKVLE.

It belongs to the tropomyosin family. Homodimer.

Tropomyosin, in association with the troponin complex, plays a central role in the calcium dependent regulation of muscle contraction. The polypeptide is Tropomyosin (Mimachlamys nobilis (Noble scallop)).